Here is a 29-residue protein sequence, read N- to C-terminus: Glucagon (29 aa).

It belongs to the glucagon family.

It localises to the secreted. Promotes hydrolysis of glycogen and lipids, and raises the blood sugar level. This Torpedo marmorata (Marbled electric ray) protein is Glucagon (gcg).